We begin with the raw amino-acid sequence, 366 residues long: Protein sigma-NS (366 aa).

Residues 1-11 are important for ssRNA-binding and formation of complexes; that stretch reads MASSLRAAISK.

It belongs to the orthoreovirus sigma-NS protein family. In terms of assembly, homooligomer; in presence of RNA. Interacts with protein mu-NS; this interaction allows the localization of sigma-NS to the viral factories. Interacts with host G3BP1 (via C-terminus); this interaction induces the relocalization of G3BP1 and other SG proteins to the viral factories periphery.

It is found in the host cytoplasm. Its function is as follows. Protein that binds to ssRNA and participates with protein mu-NS in forming the matrix of viral factories, which are large inclusions in the host cytoplasm where replication intermediates are assembled and viral RNA replication takes place. Plays a role in the inhibition of the integrated stress response (ISR) to escape from host cell translational shutoff. Participates in the disruption of stress granules (SG) through its association with host G3BP1 and mu-NS. The polypeptide is Protein sigma-NS (S3) (Mammalia (T1L)).